We begin with the raw amino-acid sequence, 430 residues long: Potassium channel subfamily K member 12 (430 aa).

Residues 1–38 are Cytoplasmic-facing; the sequence is MSSRSPRPPPRRSRRRLPRPSCCCCCCRRSHLNEDTGR. Residues 11-16 form an ER retention/retrieval signal region; sequence RRSRRR. The chain crosses the membrane as a helical span at residues 39–59; it reads FVLLAALIGLYLVAGATVFSA. N78 carries an N-linked (GlcNAc...) asparagine glycan. The segment at residues 114–134 is an intramembrane region (pore-forming); the sequence is WDFPGAFYFVGTVVSTIGFGM. Positions 129, 130, and 131 each coordinate K(+). Residues 129–134 are selectivity filter 1; it reads TIGFGM. A helical membrane pass occupies residues 145-165; sequence FLIAYGLFGCAGTILFFNLFL. The Cytoplasmic segment spans residues 166–212; sequence ERIISLLAFIMRACRERQLRRSGLLPATFRRGSALSEADSLAGWKPS. A helical transmembrane segment spans residues 213–233; sequence VYHVLLILGLFAVLLSCCASA. The segment at residues 243–263 is an intramembrane region (pore-forming); that stretch reads YVDSLYFCFVTFSTIGFGDLV. K(+) contacts are provided by T256, I257, G258, and F259. The interval 256–261 is selectivity filter 2; sequence TIGFGD. A helical transmembrane segment spans residues 282 to 302; sequence LFILLGVCCIYSLFNVISILI. Residues 303–430 are Cytoplasmic-facing; that stretch reads KQVLNWMLRK…NRLAETSASR (128 aa).

This sequence belongs to the two pore domain potassium channel (TC 1.A.1.8) family. Homodimer. Heterodimer with KCNK13.

The protein resides in the cell membrane. It localises to the endoplasmic reticulum membrane. It carries out the reaction K(+)(in) = K(+)(out). Functionally, k(+) channel subunit that may homo- and heterodimerize to form functional channels with distinct regulatory and gating properties. Can heterodimerize with KCNK13 subunit to conduct K(+) outward rectifying currents at the plasma membrane. The homodimers are mainly retained in the endoplasmic reticulum compartment and may be targeted to the cell surface upon phosphorylation or other activation signals yet to be elucidated. The protein is Potassium channel subfamily K member 12 of Homo sapiens (Human).